Here is a 344-residue protein sequence, read N- to C-terminus: 4-hydroxy-3-methylbut-2-en-1-yl diphosphate synthase (flavodoxin) (344 aa).

[4Fe-4S] cluster-binding residues include C253, C256, C288, and E295.

This sequence belongs to the IspG family. [4Fe-4S] cluster serves as cofactor.

The enzyme catalyses (2E)-4-hydroxy-3-methylbut-2-enyl diphosphate + oxidized [flavodoxin] + H2O + 2 H(+) = 2-C-methyl-D-erythritol 2,4-cyclic diphosphate + reduced [flavodoxin]. The protein operates within isoprenoid biosynthesis; isopentenyl diphosphate biosynthesis via DXP pathway; isopentenyl diphosphate from 1-deoxy-D-xylulose 5-phosphate: step 5/6. Functionally, converts 2C-methyl-D-erythritol 2,4-cyclodiphosphate (ME-2,4cPP) into 1-hydroxy-2-methyl-2-(E)-butenyl 4-diphosphate. This Thermotoga maritima (strain ATCC 43589 / DSM 3109 / JCM 10099 / NBRC 100826 / MSB8) protein is 4-hydroxy-3-methylbut-2-en-1-yl diphosphate synthase (flavodoxin).